The following is a 779-amino-acid chain: Protein phosphatase 1 regulatory subunit 21 (779 aa).

Coiled coils occupy residues 2–212 (AATA…QAAL) and 556–614 (TESR…ETVQ). Disordered stretches follow at residues 85 to 105 (ETRGKKNKKSAESSSQLSQEQ) and 612 to 637 (TVQERSVLSNTAEQKEETTEKSQREP). Residues 96 to 105 (ESSSQLSQEQ) show a composition bias toward low complexity. Over residues 624–637 (EQKEETTEKSQREP) the composition is skewed to basic and acidic residues. Residues 693-739 (AECRALAKRLSLAEKSKESLTEELKLASQSISRLQDELMTTKRSYED) are a coiled coil. The tract at residues 760-779 (EEIDTLKMTSKGNSKKNKTR) is disordered.

As to quaternary structure, component of the FERRY complex.

The protein localises to the early endosome. Its function is as follows. Component of the FERRY complex (Five-subunit Endosomal Rab5 and RNA/ribosome intermediary). The FERRY complex directly interacts with mRNAs and RAB5A, and functions as a RAB5A effector involved in the localization and the distribution of specific mRNAs most likely by mediating their endosomal transport. The complex recruits mRNAs and ribosomes to early endosomes through direct mRNA-interaction. Putative regulator of protein phosphatase 1 (PP1) activity. May play a role in the endosomal sorting process or in endosome maturation pathway. In Gallus gallus (Chicken), this protein is Protein phosphatase 1 regulatory subunit 21 (PPP1R21).